Consider the following 248-residue polypeptide: 4-hydroxy-tetrahydrodipicolinate reductase (248 aa).

Residues 9-14, 77-79, and 104-107 contribute to the NAD(+) site; these read GAKGRV, GTT, and APNF. His-134 acts as the Proton donor/acceptor in catalysis. Residue His-135 participates in (S)-2,3,4,5-tetrahydrodipicolinate binding. The Proton donor role is filled by Lys-138. A (S)-2,3,4,5-tetrahydrodipicolinate-binding site is contributed by 144–145; it reads GT.

Belongs to the DapB family.

It is found in the cytoplasm. The catalysed reaction is (S)-2,3,4,5-tetrahydrodipicolinate + NAD(+) + H2O = (2S,4S)-4-hydroxy-2,3,4,5-tetrahydrodipicolinate + NADH + H(+). The enzyme catalyses (S)-2,3,4,5-tetrahydrodipicolinate + NADP(+) + H2O = (2S,4S)-4-hydroxy-2,3,4,5-tetrahydrodipicolinate + NADPH + H(+). It participates in amino-acid biosynthesis; L-lysine biosynthesis via DAP pathway; (S)-tetrahydrodipicolinate from L-aspartate: step 4/4. Functionally, catalyzes the conversion of 4-hydroxy-tetrahydrodipicolinate (HTPA) to tetrahydrodipicolinate. The chain is 4-hydroxy-tetrahydrodipicolinate reductase from Corynebacterium efficiens (strain DSM 44549 / YS-314 / AJ 12310 / JCM 11189 / NBRC 100395).